A 93-amino-acid chain; its full sequence is Large ribosomal subunit protein uL23 (93 aa).

This sequence belongs to the universal ribosomal protein uL23 family. Part of the 50S ribosomal subunit. Contacts protein L29, and trigger factor when it is bound to the ribosome.

In terms of biological role, one of the early assembly proteins it binds 23S rRNA. One of the proteins that surrounds the polypeptide exit tunnel on the outside of the ribosome. Forms the main docking site for trigger factor binding to the ribosome. The chain is Large ribosomal subunit protein uL23 from Campylobacter jejuni subsp. doylei (strain ATCC BAA-1458 / RM4099 / 269.97).